The following is a 203-amino-acid chain: Outer-membrane lipoprotein LolB (203 aa).

The first 22 residues, 1–22 (MPVNLNHTLLLCLLVAASLLSG), serve as a signal peptide directing secretion. A lipid anchor (N-palmitoyl cysteine) is attached at cysteine 23. A lipid anchor (S-diacylglycerol cysteine) is attached at cysteine 23.

The protein belongs to the LolB family. As to quaternary structure, monomer.

The protein resides in the cell outer membrane. Plays a critical role in the incorporation of lipoproteins in the outer membrane after they are released by the LolA protein. This chain is Outer-membrane lipoprotein LolB, found in Shewanella denitrificans (strain OS217 / ATCC BAA-1090 / DSM 15013).